The chain runs to 530 residues: Light-independent protochlorophyllide reductase subunit B (530 aa).

Position 36 (Asp36) interacts with [4Fe-4S] cluster. Residue Asp290 is the Proton donor of the active site. Residue 425 to 426 participates in substrate binding; the sequence is GL.

The protein belongs to the ChlB/BchB/BchZ family. Protochlorophyllide reductase is composed of three subunits; ChlL, ChlN and ChlB. Forms a heterotetramer of two ChlB and two ChlN subunits. The cofactor is [4Fe-4S] cluster.

The enzyme catalyses chlorophyllide a + oxidized 2[4Fe-4S]-[ferredoxin] + 2 ADP + 2 phosphate = protochlorophyllide a + reduced 2[4Fe-4S]-[ferredoxin] + 2 ATP + 2 H2O. The protein operates within porphyrin-containing compound metabolism; chlorophyll biosynthesis (light-independent). Functionally, component of the dark-operative protochlorophyllide reductase (DPOR) that uses Mg-ATP and reduced ferredoxin to reduce ring D of protochlorophyllide (Pchlide) to form chlorophyllide a (Chlide). This reaction is light-independent. The NB-protein (ChlN-ChlB) is the catalytic component of the complex. The sequence is that of Light-independent protochlorophyllide reductase subunit B from Synechococcus sp. (strain WH7803).